The following is a 312-amino-acid chain: Elongation factor Ts (312 aa).

The involved in Mg(2+) ion dislocation from EF-Tu stretch occupies residues 84–87 (TDFL).

This sequence belongs to the EF-Ts family.

The protein resides in the cytoplasm. In terms of biological role, associates with the EF-Tu.GDP complex and induces the exchange of GDP to GTP. It remains bound to the aminoacyl-tRNA.EF-Tu.GTP complex up to the GTP hydrolysis stage on the ribosome. The protein is Elongation factor Ts of Caulobacter sp. (strain K31).